The primary structure comprises 374 residues: DNA primase small subunit PriS (374 aa).

Catalysis depends on residues aspartate 99, aspartate 101, and aspartate 281.

This sequence belongs to the eukaryotic-type primase small subunit family. As to quaternary structure, heterodimer of a small subunit (PriS) and a large subunit (PriL). It depends on Mg(2+) as a cofactor. Mn(2+) is required as a cofactor.

In terms of biological role, catalytic subunit of DNA primase, an RNA polymerase that catalyzes the synthesis of short RNA molecules used as primers for DNA polymerase during DNA replication. The small subunit contains the primase catalytic core and has DNA synthesis activity on its own. Binding to the large subunit stabilizes and modulates the activity, increasing the rate of DNA synthesis while decreasing the length of the DNA fragments, and conferring RNA synthesis capability. The DNA polymerase activity may enable DNA primase to also catalyze primer extension after primer synthesis. May also play a role in DNA repair. The polypeptide is DNA primase small subunit PriS (Methanoregula boonei (strain DSM 21154 / JCM 14090 / 6A8)).